The following is an 83-amino-acid chain: MAKEESIEMQGTVVDSLPNTTFRVKLENGHVVTAHISGRMRKHYIRILTGDAVTVELTPYDLTRGRIVYREAGKKPPTSKAEE.

Residues M1–A72 form the S1-like domain.

It belongs to the IF-1 family. In terms of assembly, component of the 30S ribosomal translation pre-initiation complex which assembles on the 30S ribosome in the order IF-2 and IF-3, IF-1 and N-formylmethionyl-tRNA(fMet); mRNA recruitment can occur at any time during PIC assembly.

The protein resides in the cytoplasm. Functionally, one of the essential components for the initiation of protein synthesis. Stabilizes the binding of IF-2 and IF-3 on the 30S subunit to which N-formylmethionyl-tRNA(fMet) subsequently binds. Helps modulate mRNA selection, yielding the 30S pre-initiation complex (PIC). Upon addition of the 50S ribosomal subunit IF-1, IF-2 and IF-3 are released leaving the mature 70S translation initiation complex. In Coxiella burnetii (strain Dugway 5J108-111), this protein is Translation initiation factor IF-1.